The chain runs to 191 residues: Large ribosomal subunit protein bL9 (191 aa).

Residues 171 to 191 form a disordered region; sequence EDALKPEDFFNPEAELESEEE.

This sequence belongs to the bacterial ribosomal protein bL9 family.

Functionally, binds to the 23S rRNA. The sequence is that of Large ribosomal subunit protein bL9 from Rhizobium meliloti (strain 1021) (Ensifer meliloti).